The following is a 648-amino-acid chain: 60 kDa heat shock protein homolog 1, mitochondrial (648 aa).

The transit peptide at 1-55 directs the protein to the mitochondrion; sequence MFRSCVPKAITSSRCFARMYSKDVRFGSGVRAMMIRGVDILADAVAVTMGPKGRS.

The protein belongs to the chaperonin (HSP60) family.

It localises to the mitochondrion matrix. Its function is as follows. Prevents misfolding and promotes the refolding and proper assembly of unfolded polypeptides generated under stress conditions. The polypeptide is 60 kDa heat shock protein homolog 1, mitochondrial (Hsp60B) (Drosophila melanogaster (Fruit fly)).